The primary structure comprises 448 residues: MATILQHLPVGQKVGIAFSGGLDTSAALRWMKNKGALPYAYTANLGQPDEADYDEIPRKAMEYGAEKARLIDCRTQLAHEGIAAIQAGAFHISTGGITYFNTTPLGRAVTGTMLVAAMKEDDVHIWGDGSTFKGNDIERFYRYGLLTNPALKIYKPWLDQKFIDELGGRAEMSAFMTKEGFGYKMSAEKAYSTDSNMLGATHEAKDLEFLSSGIRIVNPIMGVAFWKPEVDVPAEEVSVTFDEGQPVAVNGKEIADPVELFLELNRIGGRHGLGMSDQIENRIIEAKSRGIYEAPGMALLHIAYERLVTGIHNEDTIEQYRLNGLKLGRLLYQGRWFDPQAIMLRETAQRWVARAVTGTVTLELRRGNDYSILNTESPNLTYAPERLSMEKVEDAPFSPLDRIGQLTMRNLDISDTRGKLGVYARAGLLSLGGNAALAQLEDGGAKKK.

Residues 17–25 (AFSGGLDTS) and Ala-43 each bind ATP. Position 99 (Tyr-99) interacts with L-citrulline. Residues Gly-129 and Thr-131 each coordinate ATP. Residues Thr-131, Asn-135, and Asp-136 each coordinate L-aspartate. Asn-135 provides a ligand contact to L-citrulline. Residue Asp-136 participates in ATP binding. L-citrulline is bound by residues Arg-139 and Ser-192. Residue Asp-194 coordinates ATP. Residues Thr-201, Glu-203, and Glu-280 each contribute to the L-citrulline site.

It belongs to the argininosuccinate synthase family. Type 2 subfamily. As to quaternary structure, homotetramer.

It is found in the cytoplasm. It carries out the reaction L-citrulline + L-aspartate + ATP = 2-(N(omega)-L-arginino)succinate + AMP + diphosphate + H(+). Its pathway is amino-acid biosynthesis; L-arginine biosynthesis; L-arginine from L-ornithine and carbamoyl phosphate: step 2/3. This is Argininosuccinate synthase from Acidovorax ebreus (strain TPSY) (Diaphorobacter sp. (strain TPSY)).